The chain runs to 1863 residues: Calcineurin-binding protein 1 (1863 aa).

TPR repeat units lie at residues 30 to 65 (LSQT…ITNS), 81 to 116 (FLAL…DAKD), and 118 to 150 (VLWN…SPNN). A disordered region spans residues 315–361 (ERESGGSVKEKEPVFSEEHPQERRSTRLERLRNQKPEKEGLEFDNSK). 12 TPR repeats span residues 543–576 (ARYF…LGRE), 602–637 (IHEI…LAPL), 866–900 (INSP…EKNE), 955–988 (QCFF…DYQT), 990–1009 (EQCV…SSRT), 1011–1031 (LVKL…PPDD), 1143–1183 (FESW…SQRV), 1226–1263 (VPFY…RQDW), 1264–1297 (SHAF…NPSA), 1306–1339 (ASRL…KDTA), 1377–1412 (EGVW…LAQG), and 1508–1541 (NSLR…SMSR). Residues 894–923 (VHVEKNENNKTESKKDGSEEQVGYREKEQS) are compositionally biased toward basic and acidic residues. A disordered region spans residues 894–941 (VHVEKNENNKTESKKDGSEEQVGYREKEQSEQQSKQIPEHTEEVAEEE). Residues 1813 to 1840 (KMKRGASTSSVVPSVQSGGTSEPEPAPK) are disordered. The segment covering 1818–1832 (ASTSSVVPSVQSGGT) has biased composition (polar residues).

In terms of assembly, component of the HIRA complex made of UBN1, UBN2, ASF1A, CABIN1 and HIRA. In terms of tissue distribution, expressed at low levels in seedlings.

The protein resides in the nucleus. Its function is as follows. May be required for replication-independent chromatin assembly. The protein is Calcineurin-binding protein 1 of Arabidopsis thaliana (Mouse-ear cress).